Reading from the N-terminus, the 40-residue chain is ADNKRPIWVMGGMVNSLAQIKEFVGLGLDNSEKDNKWYKQ.

Glutamate 32 and aspartate 34 together coordinate Mg(2+).

Belongs to the arthropod phospholipase D family. Class II subfamily. Requires Mg(2+) as cofactor. Contains 2 disulfide bonds. As to expression, expressed by the venom gland.

It localises to the secreted. The enzyme catalyses an N-(acyl)-sphingosylphosphocholine = an N-(acyl)-sphingosyl-1,3-cyclic phosphate + choline. It carries out the reaction an N-(acyl)-sphingosylphosphoethanolamine = an N-(acyl)-sphingosyl-1,3-cyclic phosphate + ethanolamine. The catalysed reaction is a 1-acyl-sn-glycero-3-phosphocholine = a 1-acyl-sn-glycero-2,3-cyclic phosphate + choline. It catalyses the reaction a 1-acyl-sn-glycero-3-phosphoethanolamine = a 1-acyl-sn-glycero-2,3-cyclic phosphate + ethanolamine. Functionally, dermonecrotic toxins cleave the phosphodiester linkage between the phosphate and headgroup of certain phospholipids (sphingolipid and lysolipid substrates), forming an alcohol (often choline) and a cyclic phosphate. This toxin acts on sphingomyelin (SM). It may also act on ceramide phosphoethanolamine (CPE), lysophosphatidylcholine (LPC) and lysophosphatidylethanolamine (LPE), but not on lysophosphatidylserine (LPS), and lysophosphatidylglycerol (LPG). It acts by transphosphatidylation, releasing exclusively cyclic phosphate products as second products. In vivo, intradermal injection induces dermonecrosis. Induces, hemolysis, vascular permeability, edema, inflammatory response, and platelet aggregation. The chain is Dermonecrotic toxin LgSicTox-alphaI-1 from Loxosceles gaucho (Spider).